Consider the following 339-residue polypeptide: Anthranilate phosphoribosyltransferase (339 aa).

5-phospho-alpha-D-ribose 1-diphosphate contacts are provided by residues Gly-80, 83–84 (GD), 90–93 (NVST), 108–116 (KHGNRSVTS), and Ser-120. Residue Gly-80 participates in anthranilate binding. A Mg(2+)-binding site is contributed by Ser-92. Asn-111 lines the anthranilate pocket. Residue Arg-166 participates in anthranilate binding. Residues Asp-225 and Glu-226 each contribute to the Mg(2+) site.

This sequence belongs to the anthranilate phosphoribosyltransferase family. In terms of assembly, homodimer. Requires Mg(2+) as cofactor.

It carries out the reaction N-(5-phospho-beta-D-ribosyl)anthranilate + diphosphate = 5-phospho-alpha-D-ribose 1-diphosphate + anthranilate. The protein operates within amino-acid biosynthesis; L-tryptophan biosynthesis; L-tryptophan from chorismate: step 2/5. Functionally, catalyzes the transfer of the phosphoribosyl group of 5-phosphorylribose-1-pyrophosphate (PRPP) to anthranilate to yield N-(5'-phosphoribosyl)-anthranilate (PRA). The sequence is that of Anthranilate phosphoribosyltransferase from Ignicoccus hospitalis (strain KIN4/I / DSM 18386 / JCM 14125).